A 256-amino-acid chain; its full sequence is Nuclear shuttle protein (256 aa).

Positions 18–50 (VSRNQSSKRGTFVRRTDGKRRKGPSSKAHDEPK) are disordered. Positions 21 to 42 (NQSSKRGTFVRRTDGKRRKGPS) match the Bipartite nuclear localization signal motif. Residues 81-96 (VLGKIEPNRSRSYIKL) carry the Nuclear localization signal motif. Residues 150–187 (EIFGARIHSHGNLAITPGLKDRYYVLHVLKRVLSVEKD) are interaction with Arabidopsis thaliana NSI protein.

Belongs to the begomovirus nuclear shuttle protein family. Binds to single-stranded and double-stranded viral DNA. Interacts with the host nuclear shuttle interacting (NSI) protein. This interaction may allow NSP to recruit NSI monomers to the viral genome and thus regulate nuclear export of viral genome by NSP.

The protein resides in the host nucleus. Its subcellular location is the host cytoplasm. It localises to the host cell membrane. Functionally, binds to the genomic viral ssDNA, shuttles it into and out of the cell nucleus. Begomoviruses use 2 proteins to transport their DNA from cell to cell. The nuclear shuttle protein (NSP) shuttles it between nucleus and cytoplasm and the movement protein (MP) probably transports the DNA-NSP complex to the cell periphery and facilitates movement across the cell wall. In Brassica oleracea (Wild cabbage), this protein is Nuclear shuttle protein.